A 208-amino-acid chain; its full sequence is Large ribosomal subunit protein uL3 (208 aa).

The tract at residues Gly116–Pro146 is disordered.

Belongs to the universal ribosomal protein uL3 family. Part of the 50S ribosomal subunit. Forms a cluster with proteins L14 and L19.

In terms of biological role, one of the primary rRNA binding proteins, it binds directly near the 3'-end of the 23S rRNA, where it nucleates assembly of the 50S subunit. In Streptococcus mutans serotype c (strain ATCC 700610 / UA159), this protein is Large ribosomal subunit protein uL3.